The following is a 462-amino-acid chain: Probable Xaa-Pro aminopeptidase pepP (462 aa).

The Mn(2+) site is built by Asp259, Asp270, Glu393, and Glu433.

This sequence belongs to the peptidase M24B family. Requires Mn(2+) as cofactor.

It catalyses the reaction Release of any N-terminal amino acid, including proline, that is linked to proline, even from a dipeptide or tripeptide.. In terms of biological role, catalyzes the removal of a penultimate prolyl residue from the N-termini of peptides. The chain is Probable Xaa-Pro aminopeptidase pepP (pepP) from Metarhizium robertsii (strain ARSEF 23 / ATCC MYA-3075) (Metarhizium anisopliae (strain ARSEF 23)).